The sequence spans 98 residues: NADH-ubiquinone oxidoreductase chain 4L (98 aa).

Transmembrane regions (helical) follow at residues 2-22 (TSAF…TFMF), 26-46 (LMST…MTST), and 59-79 (IPIT…ALLV).

Belongs to the complex I subunit 4L family. As to quaternary structure, core subunit of respiratory chain NADH dehydrogenase (Complex I) which is composed of 45 different subunits.

It is found in the mitochondrion inner membrane. The catalysed reaction is a ubiquinone + NADH + 5 H(+)(in) = a ubiquinol + NAD(+) + 4 H(+)(out). Functionally, core subunit of the mitochondrial membrane respiratory chain NADH dehydrogenase (Complex I) which catalyzes electron transfer from NADH through the respiratory chain, using ubiquinone as an electron acceptor. Part of the enzyme membrane arm which is embedded in the lipid bilayer and involved in proton translocation. In Rattus norvegicus (Rat), this protein is NADH-ubiquinone oxidoreductase chain 4L.